The chain runs to 294 residues: Glycine--tRNA ligase alpha subunit (294 aa).

The protein belongs to the class-II aminoacyl-tRNA synthetase family. Tetramer of two alpha and two beta subunits.

It localises to the cytoplasm. It carries out the reaction tRNA(Gly) + glycine + ATP = glycyl-tRNA(Gly) + AMP + diphosphate. This chain is Glycine--tRNA ligase alpha subunit, found in Natranaerobius thermophilus (strain ATCC BAA-1301 / DSM 18059 / JW/NM-WN-LF).